The chain runs to 218 residues: Calcineurin B-like protein 5 (218 aa).

EF-hand domains lie at 35 to 69, 70 to 105, 107 to 142, and 151 to 186; these read EVEA…FRNK, KTNL…FHPD, PEEQ…LLDE, and AVEM…NPYV.

The protein belongs to the calcineurin regulatory subunit family. Homodimer. As to expression, expressed at low levels in roots, shoots, culms, leaves and young spikelets.

Its function is as follows. Acts as a calcium sensor. CBL proteins interact with CIPK serine-threonine protein kinases. Binding of a CBL protein to the regulatory NAF domain of a CIPK protein lead to the activation of the kinase in a calcium-dependent manner. The protein is Calcineurin B-like protein 5 (CBL5) of Oryza sativa subsp. japonica (Rice).